The primary structure comprises 100 residues: A-type ATP synthase subunit F (100 aa).

This sequence belongs to the V-ATPase F subunit family. In terms of assembly, has multiple subunits with at least A(3), B(3), C, D, E, F, H, I and proteolipid K(x).

The protein localises to the cell membrane. Its function is as follows. Component of the A-type ATP synthase that produces ATP from ADP in the presence of a proton gradient across the membrane. This chain is A-type ATP synthase subunit F, found in Methanoregula boonei (strain DSM 21154 / JCM 14090 / 6A8).